The primary structure comprises 387 residues: Probable nitrate transporter NarT (387 aa).

Helical transmembrane passes span 14-34, 45-65, 69-89, 97-117, 137-157, 161-181, 211-231, 246-266, 268-288, 294-314, 330-350, and 358-378; these read TLSLVAGFMAWSIISPLMPFI, ISVILAIPVILGSVLRVPFGY, IVGAKWVFFWSFIVLLLPIFL, GMLMLSGFFLGIGGAIFSVGV, GVGNIGTAVSSFCAPVLAGAI, NTVRSYLIILSIFAILMFFLG, WYFITFGAFVAFGIFLPNFLV, GIFIALATFLRPVGGVIGDKF, AVQALIIDFVIMIIGALILSL, LFTIGCLAISICAGIGNGLIF, GIVSMMGGLGGFFPPLVITFV, and HLAFFFLAIFGVIALITMIHL.

The protein belongs to the major facilitator superfamily. Nitrate/nitrite porter (TC 2.A.1.8) family.

It is found in the cell membrane. Its function is as follows. Probably required for nitrate uptake under anoxic conditions. Also possibly involved in excretion of nitrite produced by the dissimilatory reduction of nitrate. In Staphylococcus epidermidis (strain ATCC 35984 / DSM 28319 / BCRC 17069 / CCUG 31568 / BM 3577 / RP62A), this protein is Probable nitrate transporter NarT (narT).